The chain runs to 774 residues: Cilium assembly protein DZIP1L (774 aa).

Residues 166 to 189 (HTCHLCDKTFMNATFLRGHIQRRH) form a C2H2-type zinc finger. A coiled-coil region spans residues 204–450 (LGEVLEELRA…RKVLAALRKN (247 aa)). Disordered stretches follow at residues 415–435 (MPKAVATEEDSSEEELEASLE), 515–674 (NKEV…ASSG), and 686–774 (KQLE…IPGW). Acidic residues predominate over residues 421-433 (TEEDSSEEELEAS). Residues Ser425 and Ser426 each carry the phosphoserine modification. Basic and acidic residues predominate over residues 515–526 (NKEVSSRVKQRW). A compositionally biased stretch (low complexity) spans 597 to 616 (GPSSTPVSPGSGLSSTPPFS).

Belongs to the DZIP C2H2-type zinc-finger protein family. In terms of assembly, interacts with SEPTIN2.

The protein resides in the cytoplasm. It localises to the cytoskeleton. It is found in the cilium basal body. Its subcellular location is the microtubule organizing center. The protein localises to the centrosome. The protein resides in the centriole. In terms of biological role, involved in primary cilium formation. Probably acts as a transition zone protein required for localization of PKD1/PC1 and PKD2/PC2 to the ciliary membrane. This is Cilium assembly protein DZIP1L from Mus musculus (Mouse).